The following is a 205-amino-acid chain: Small ribosomal subunit protein uS4 (205 aa).

Residues M1–G16 show a composition bias toward basic and acidic residues. The disordered stretch occupies residues M1 to S46. Residues S94–V157 enclose the S4 RNA-binding domain.

Belongs to the universal ribosomal protein uS4 family. In terms of assembly, part of the 30S ribosomal subunit. Contacts protein S5. The interaction surface between S4 and S5 is involved in control of translational fidelity.

Its function is as follows. One of the primary rRNA binding proteins, it binds directly to 16S rRNA where it nucleates assembly of the body of the 30S subunit. Functionally, with S5 and S12 plays an important role in translational accuracy. This chain is Small ribosomal subunit protein uS4, found in Rhizobium leguminosarum bv. trifolii (strain WSM2304).